We begin with the raw amino-acid sequence, 573 residues long: DNA polymerase lambda (573 aa).

A BRCT domain is found at 35–131 (EARGWLSSLR…RLTDTEGFSL (97 aa)). 2 disordered regions span residues 126 to 204 (TEGF…GPQV) and 214 to 233 (TGHY…APEA). A DNA-binding region spans residues 263 to 277 (KAYSVQGDKWRALGY). The active-site Schiff-base intermediate with DNA is the Lys310. A DNA-binding region spans residues 343-346 (GTKT). DCTP contacts are provided by residues Arg384, 415-418 (SYRR), and 424-427 (GDVD). The segment at 418–427 (RGKMTCGDVD) is involved in primer binding. Mn(2+) is bound by residues Asp425, Asp427, and Asp488. Residues 464 to 503 (ENGQQQKYLGVCRLPGPGKRHRRLDIIVVPYCEFACALLY) form a DNA-binding region. Residue Asn511 coordinates dCTP.

It belongs to the DNA polymerase type-X family. In terms of assembly, interacts with PCNA. Interacts with PAXX; promoting POLL recruitment to double-strand breaks (DSBs) and stimulation of the end-filling activity of POLL. Interacts with XRCC4; promoting POLL recruitment to double-strand breaks (DSBs) and stimulation of the end-filling activity of POLL. Interacts with NHEJ1/XLF; promoting POLL recruitment to double-strand breaks (DSBs) and stimulation of the end-filling activity of POLL. Requires Mn(2+) as cofactor.

Its subcellular location is the nucleus. It catalyses the reaction DNA(n) + a 2'-deoxyribonucleoside 5'-triphosphate = DNA(n+1) + diphosphate. DNA polymerase that functions in several pathways of DNA repair. Involved in base excision repair (BER) responsible for repair of lesions that give rise to abasic (AP) sites in DNA. Also contributes to DNA double-strand break repair by non-homologous end joining and homologous recombination. Has both template-dependent and template-independent (terminal transferase) DNA polymerase activities. Also has a 5'-deoxyribose-5-phosphate lyase (dRP lyase) activity. The sequence is that of DNA polymerase lambda from Mus musculus (Mouse).